Here is a 211-residue protein sequence, read N- to C-terminus: MSTNITFHASALTRSERTELRNQRGLTIWLTGLSASGKSTLAVELEHQLVRDRRVHAYRLDGDNIRFGLNKDLGFSEADRNENIRRIAEVAKLFADSNSIAITSFISPYRKDRDTARQLHEVATPGEETGLPFVEVYVDVPVEVAEQRDPKGLYKKAREGVIKEFTGISAPYEAPANPEVHVKNYELPVQDAVKQIIDYLDTKGYLPAKKE.

32 to 39 (GLSASGKS) contributes to the ATP binding site. Catalysis depends on S107, which acts as the Phosphoserine intermediate.

Belongs to the APS kinase family. Homodimer.

It carries out the reaction adenosine 5'-phosphosulfate + ATP = 3'-phosphoadenylyl sulfate + ADP + H(+). It participates in sulfur metabolism; hydrogen sulfide biosynthesis; sulfite from sulfate: step 2/3. Catalyzes the synthesis of activated sulfate. This Penicillium chrysogenum (Penicillium notatum) protein is Adenylyl-sulfate kinase.